We begin with the raw amino-acid sequence, 222 residues long: Uracil-DNA glycosylase (222 aa).

Asp-66 (proton acceptor) is an active-site residue.

This sequence belongs to the uracil-DNA glycosylase (UDG) superfamily. UNG family.

It is found in the cytoplasm. The catalysed reaction is Hydrolyzes single-stranded DNA or mismatched double-stranded DNA and polynucleotides, releasing free uracil.. In terms of biological role, excises uracil residues from the DNA which can arise as a result of misincorporation of dUMP residues by DNA polymerase or due to deamination of cytosine. This Porphyromonas gingivalis (strain ATCC BAA-308 / W83) protein is Uracil-DNA glycosylase.